The sequence spans 209 residues: Large ribosomal subunit protein uL3 (209 aa).

Polar residues predominate over residues 112–122; it reads GTTRGHGTQGN. The disordered stretch occupies residues 112–146; it reads GTTRGHGTQGNIKRWGQSRGPETHGSRYHRIPGSM.

Belongs to the universal ribosomal protein uL3 family. In terms of assembly, part of the 50S ribosomal subunit. Forms a cluster with proteins L14 and L19.

One of the primary rRNA binding proteins, it binds directly near the 3'-end of the 23S rRNA, where it nucleates assembly of the 50S subunit. The chain is Large ribosomal subunit protein uL3 from Lactobacillus johnsonii (strain CNCM I-12250 / La1 / NCC 533).